The primary structure comprises 498 residues: Glycerol kinase (498 aa).

Thr12 contributes to the ADP binding site. ATP is bound by residues Thr12, Thr13, and Ser14. A sn-glycerol 3-phosphate-binding site is contributed by Thr12. ADP is bound at residue Arg16. Sn-glycerol 3-phosphate is bound by residues Arg82, Glu83, and Tyr134. Glycerol-binding residues include Arg82, Glu83, and Tyr134. His230 carries the post-translational modification Phosphohistidine; by HPr. Asp244 contributes to the sn-glycerol 3-phosphate binding site. Positions 244 and 245 each coordinate glycerol. ADP-binding residues include Thr266 and Gly309. Positions 266, 309, 313, and 410 each coordinate ATP. Residues Gly410 and Asn414 each contribute to the ADP site.

This sequence belongs to the FGGY kinase family. Homotetramer and homodimer (in equilibrium). The phosphoenolpyruvate-dependent sugar phosphotransferase system (PTS), including enzyme I, and histidine-containing protein (HPr) are required for the phosphorylation, which leads to the activation of the enzyme.

The catalysed reaction is glycerol + ATP = sn-glycerol 3-phosphate + ADP + H(+). The protein operates within polyol metabolism; glycerol degradation via glycerol kinase pathway; sn-glycerol 3-phosphate from glycerol: step 1/1. Activated by phosphorylation and inhibited by fructose 1,6-bisphosphate (FBP). Functionally, key enzyme in the regulation of glycerol uptake and metabolism. Catalyzes the phosphorylation of glycerol to yield sn-glycerol 3-phosphate. This chain is Glycerol kinase, found in Staphylococcus aureus (strain MSSA476).